We begin with the raw amino-acid sequence, 392 residues long: Stilbene synthase 2 (392 aa).

55–58 (KFNR) lines the substrate pocket. Cysteine 164 is a catalytic residue. Substrate-binding positions include leucine 267 and 305 to 307 (GGP).

It belongs to the thiolase-like superfamily. Chalcone/stilbene synthases family. In terms of assembly, homodimer.

Its subcellular location is the cytoplasm. It catalyses the reaction 4-coumaroyl-CoA + 3 malonyl-CoA + 3 H(+) = trans-resveratrol + 4 CO2 + 4 CoA. It participates in phytoalexin biosynthesis; 3,4',5-trihydroxystilbene biosynthesis; 3,4',5-trihydroxystilbene from trans-4-coumarate: step 2/2. Functionally, mediates resistance to pathogens which are sensitive to stilbenes. In Vitis vinifera (Grape), this protein is Stilbene synthase 2.